The chain runs to 367 residues: Putative F-box protein At4g10190 (367 aa).

The 51-residue stretch at 3 to 53 folds into the F-box domain; that stretch reads KRNIVDLPEDLVMEILARVPTVTLVRLQSTSKRWNVLIEDKRFAEQHFTNA.

In Arabidopsis thaliana (Mouse-ear cress), this protein is Putative F-box protein At4g10190.